Consider the following 213-residue polypeptide: Orotate phosphoribosyltransferase (213 aa).

Lys-26 is a 5-phospho-alpha-D-ribose 1-diphosphate binding site. Residue 34–35 (FF) participates in orotate binding. 5-phospho-alpha-D-ribose 1-diphosphate-binding positions include 72–73 (YK), Arg-99, Lys-100, Lys-103, His-105, and 124–132 (DDVITAGTA). 2 residues coordinate orotate: Thr-128 and Arg-156.

Belongs to the purine/pyrimidine phosphoribosyltransferase family. PyrE subfamily. As to quaternary structure, homodimer. Mg(2+) is required as a cofactor.

The catalysed reaction is orotidine 5'-phosphate + diphosphate = orotate + 5-phospho-alpha-D-ribose 1-diphosphate. It participates in pyrimidine metabolism; UMP biosynthesis via de novo pathway; UMP from orotate: step 1/2. Catalyzes the transfer of a ribosyl phosphate group from 5-phosphoribose 1-diphosphate to orotate, leading to the formation of orotidine monophosphate (OMP). The sequence is that of Orotate phosphoribosyltransferase from Erwinia tasmaniensis (strain DSM 17950 / CFBP 7177 / CIP 109463 / NCPPB 4357 / Et1/99).